A 251-amino-acid polypeptide reads, in one-letter code: Probable transcriptional regulatory protein PMI1113 (251 aa).

The protein belongs to the TACO1 family.

The protein localises to the cytoplasm. This chain is Probable transcriptional regulatory protein PMI1113, found in Proteus mirabilis (strain HI4320).